Consider the following 49-residue polypeptide: Large ribosomal subunit protein bL33B (49 aa).

It belongs to the bacterial ribosomal protein bL33 family.

The sequence is that of Large ribosomal subunit protein bL33B from Latilactobacillus sakei subsp. sakei (strain 23K) (Lactobacillus sakei subsp. sakei).